A 1316-amino-acid chain; its full sequence is DNA-directed RNA polymerase subunit beta' (1316 aa).

Zn(2+) contacts are provided by Cys-60, Cys-62, Cys-75, and Cys-78. Residues 183-209 are disordered; it reads ELEEEGAKSDVRRKVRDGGEREMRQLR. Mg(2+) is bound by residues Asp-535, Asp-537, and Asp-539. 4 residues coordinate Zn(2+): Cys-890, Cys-966, Cys-973, and Cys-976.

This sequence belongs to the RNA polymerase beta' chain family. The RNAP catalytic core consists of 2 alpha, 1 beta, 1 beta' and 1 omega subunit. When a sigma factor is associated with the core the holoenzyme is formed, which can initiate transcription. It depends on Mg(2+) as a cofactor. Zn(2+) serves as cofactor.

The enzyme catalyses RNA(n) + a ribonucleoside 5'-triphosphate = RNA(n+1) + diphosphate. In terms of biological role, DNA-dependent RNA polymerase catalyzes the transcription of DNA into RNA using the four ribonucleoside triphosphates as substrates. The chain is DNA-directed RNA polymerase subunit beta' from Mycolicibacterium gilvum (strain PYR-GCK) (Mycobacterium gilvum (strain PYR-GCK)).